We begin with the raw amino-acid sequence, 185 residues long: Peptidyl-tRNA hydrolase (185 aa).

Residue Tyr-14 coordinates tRNA. His-19 functions as the Proton acceptor in the catalytic mechanism. Residues Phe-64, Asn-66, and Asn-112 each contribute to the tRNA site.

It belongs to the PTH family. As to quaternary structure, monomer.

The protein resides in the cytoplasm. The catalysed reaction is an N-acyl-L-alpha-aminoacyl-tRNA + H2O = an N-acyl-L-amino acid + a tRNA + H(+). Hydrolyzes ribosome-free peptidyl-tRNAs (with 1 or more amino acids incorporated), which drop off the ribosome during protein synthesis, or as a result of ribosome stalling. Its function is as follows. Catalyzes the release of premature peptidyl moieties from peptidyl-tRNA molecules trapped in stalled 50S ribosomal subunits, and thus maintains levels of free tRNAs and 50S ribosomes. The sequence is that of Peptidyl-tRNA hydrolase from Halalkalibacterium halodurans (strain ATCC BAA-125 / DSM 18197 / FERM 7344 / JCM 9153 / C-125) (Bacillus halodurans).